Here is a 375-residue protein sequence, read N- to C-terminus: MQCALYDAGRCRSCQWITQSVNEQLSAKTADLHRLLAGLPVEQWCSPIGGPEQHFRNKAKMVVSGSVEKPLFGMLHRDGTPVDLCGCPLYPASFAPVFSALKPFIARAGLTPYNVARKRGELKYLLLTESQFDGGMMLRFVLRSETKLTQLRAALPWLRAQLPQLRVITANIQPVHMAIMEGETEIYLTDQQALAERFNDVPLWIRPQSFFQTNPTVASRLYATARDWVGQLPVRHMWDLFCGVGGFGLHCATPQMQLTGIEIAPEAIACAKQSAAELGLTRLHFQALDSTQFATAQGETPDLVLVNPPRRGIGKPLCDYLAQMAPRFIIYSSCNAQTMAQDIRHLPNYRIQRVQLFDMFPHTAHYEVLTLLCRL.

Residues Cys-3, Cys-11, Cys-14, and Cys-87 each contribute to the [4Fe-4S] cluster site. Residues Gln-212, Phe-241, Glu-262, and Asn-307 each coordinate S-adenosyl-L-methionine. Cys-334 (nucleophile) is an active-site residue.

Belongs to the class I-like SAM-binding methyltransferase superfamily. RNA M5U methyltransferase family. RlmC subfamily.

It catalyses the reaction uridine(747) in 23S rRNA + S-adenosyl-L-methionine = 5-methyluridine(747) in 23S rRNA + S-adenosyl-L-homocysteine + H(+). Catalyzes the formation of 5-methyl-uridine at position 747 (m5U747) in 23S rRNA. The protein is 23S rRNA (uracil(747)-C(5))-methyltransferase RlmC of Salmonella dublin (strain CT_02021853).